Reading from the N-terminus, the 20-residue chain is Brevinin-1SPd (20 aa).

Cys-14 and Cys-20 are joined by a disulfide.

As to expression, expressed by the skin glands.

It is found in the secreted. Its function is as follows. Antimicrobial peptide with activity against Gram-negative and Gram-positive bacteria (MIC=13 uM against E.coli, MIC=3 uM against S.aureus) and fungi (MIC=3 uM against C.albicans). Shows hemolytic activity on human erythrocytes (HC(50)=8 uM). This chain is Brevinin-1SPd, found in Lithobates septentrionalis (Mink frog).